Here is a 1077-residue protein sequence, read N- to C-terminus: Histone deacetylase 4 (1077 aa).

Residues 66–169 (REQQLQQELL…GKESAVASTE (104 aa)) adopt a coiled-coil conformation. The interaction with MEF2A stretch occupies residues 117 to 312 (MLAMKHQQEL…NSSSGNVSTE (196 aa)). The segment covering 132–162 (KLERHRQEQELEKQHREQKLQQLKNKEKGKE) has biased composition (basic and acidic residues). Disordered stretches follow at residues 132 to 167 (KLERHRQEQELEKQHREQKLQQLKNKEKGKESAVAS), 204 to 225 (KTQHSSLDQSSPPQSGVSASYN), and 239 to 327 (PLRK…AETS). A compositionally biased stretch (polar residues) spans 205 to 224 (TQHSSLDQSSPPQSGVSASY). The residue at position 209 (Ser-209) is a Phosphoserine. Ser-245 is modified (phosphoserine; by CaMK4 and SIK1). The segment covering 258 to 273 (KVAERRSSPLLRRKDG) has biased composition (basic and acidic residues). Residues 289–310 (SACSSAPGSGPSSPNSSSGNVS) show a composition bias toward low complexity. The PxLPxI/L motif; mediates interaction with ANKRA2 and 14-3-3 proteins motif lies at 348–353 (PSLPNI). Ser-349 carries the phosphoserine modification. A Phosphoserine; by CaMK4 and SIK1 modification is found at Ser-466. Disordered regions lie at residues 508–530 (SKPSEPPRQPESHPEETEEELRE), 542–582 (RLPG…RPAT), and 623–646 (RPLSRAQSSPASATFPMSVQEPPT). Residues 515 to 530 (RQPESHPEETEEELRE) are compositionally biased toward basic and acidic residues. Lys-557 participates in a covalent cross-link: Glycyl lysine isopeptide (Lys-Gly) (interchain with G-Cter in SUMO). Residues Ser-563, Ser-630, and Ser-631 each carry the phosphoserine modification. The span at 627 to 639 (RAQSSPASATFPM) shows a compositional bias: polar residues. The segment at 653–1077 (GLVYDTLMLK…EEPMEEEPPL (425 aa)) is histone deacetylase. Zn(2+) contacts are provided by Cys-665, Cys-667, His-673, and Cys-744. His-796 is an active-site residue. A Nuclear export signal motif is present at residues 1044 to 1077 (EEAETVTAMASLSVGVKPAEKRSEEEPMEEEPPL). Residues 1052 to 1077 (MASLSVGVKPAEKRSEEEPMEEEPPL) are disordered.

It belongs to the histone deacetylase family. HD type 2 subfamily. In terms of assembly, homodimer. Homodimerization via its N-terminal domain. Interacts with HDAC7. Interacts with MEF2A, MEF2C, MEF2D, MORC2 and NR2C1. Interacts with a 14-3-3 chaperone proteins in a phosphorylation dependent manner. Interacts with 14-3-3 protein YWHAB. Interacts with KDM5B and AHRR. Interacts with BTBD14B. Interacts with MYOCD. Interacts (via PxLPxI/L motif) with ANKRA2 (via ankyrin repeats). Interacts with CUL7 (as part of the 3M complex); negatively regulated by ANKRA2. Interacts with EP300 in the presence of TFAP2C. Interacts with HSPA1A and HSPA1B leading to their deacetylation at 'Lys-77'. Interacts with ZBTB7B; the interaction allows the recruitment of HDAC4 on CD8 loci for deacetylation and possible inhibition of CD8 genes expression. Interacts with DHX36. Interacts with SIK3; this interaction leads to HDAC4 retention in the cytoplasm. Phosphorylated by CaMK4 at Ser-245, Ser-466 and Ser-630. Phosphorylation at other residues by CaMK2D is required for the interaction with 14-3-3. Phosphorylation at Ser-349, within the PxLPxI/L motif, impairs the binding of ANKRA2 but generates a high-affinity docking site for 14-3-3. Post-translationally, sumoylation on Lys-557 is promoted by the E3 SUMO-protein ligase RANBP2, and prevented by phosphorylation by CaMK4.

It is found in the nucleus. It localises to the cytoplasm. The enzyme catalyses N(6)-acetyl-L-lysyl-[histone] + H2O = L-lysyl-[histone] + acetate. In terms of biological role, responsible for the deacetylation of lysine residues on the N-terminal part of the core histones (H2A, H2B, H3 and H4). Histone deacetylation gives a tag for epigenetic repression and plays an important role in transcriptional regulation, cell cycle progression and developmental events. Histone deacetylases act via the formation of large multiprotein complexes. Involved in muscle maturation via its interaction with the myocyte enhancer factors such as MEF2A, MEF2C and MEF2D. Deacetylates HSPA1A and HSPA1B at 'Lys-77' leading to their preferential binding to co-chaperone STUB1. The chain is Histone deacetylase 4 (Hdac4) from Rattus norvegicus (Rat).